An 80-amino-acid chain; its full sequence is DNA-directed RNA polymerase RPB10 homolog (80 aa).

Zn(2+) contacts are provided by Cys7, Cys10, Cys65, and Cys66.

It belongs to the archaeal RpoN/eukaryotic RPB10 RNA polymerase subunit family. In terms of assembly, part of the viral DNA-directed RNA polymerase that consists of 8 polII-like subunits (RPB1, RPB2, RPB3, RPB5, RPB6, RPB7, RPB9, RPB10), a capping enzyme and a termination factor.

It is found in the host cytoplasm. In terms of biological role, component of the DNA-directed RNA polymerase (RNAP) that catalyzes the transcription in the cytoplasm of viral DNA into RNA using the four ribonucleoside triphosphates as substrates. The chain is DNA-directed RNA polymerase RPB10 homolog from African swine fever virus (strain Badajoz 1971 Vero-adapted) (Ba71V).